The primary structure comprises 101 residues: ATP-dependent Clp protease adapter protein ClpS (101 aa).

Belongs to the ClpS family. As to quaternary structure, binds to the N-terminal domain of the chaperone ClpA.

In terms of biological role, involved in the modulation of the specificity of the ClpAP-mediated ATP-dependent protein degradation. The sequence is that of ATP-dependent Clp protease adapter protein ClpS from Treponema denticola (strain ATCC 35405 / DSM 14222 / CIP 103919 / JCM 8153 / KCTC 15104).